Reading from the N-terminus, the 123-residue chain is Small ribosomal subunit protein uS13 (123 aa).

Residues 94-123 form a disordered region; that stretch reads AGLPVRGQRTKTNARTRKGPKKTVGVQRKK. Over residues 101–123 the composition is skewed to basic residues; the sequence is QRTKTNARTRKGPKKTVGVQRKK.

It belongs to the universal ribosomal protein uS13 family. Part of the 30S ribosomal subunit. Forms a loose heterodimer with protein S19. Forms two bridges to the 50S subunit in the 70S ribosome.

Located at the top of the head of the 30S subunit, it contacts several helices of the 16S rRNA. In the 70S ribosome it contacts the 23S rRNA (bridge B1a) and protein L5 of the 50S subunit (bridge B1b), connecting the 2 subunits; these bridges are implicated in subunit movement. Contacts the tRNAs in the A and P-sites. The protein is Small ribosomal subunit protein uS13 of Acetivibrio thermocellus (strain ATCC 27405 / DSM 1237 / JCM 9322 / NBRC 103400 / NCIMB 10682 / NRRL B-4536 / VPI 7372) (Clostridium thermocellum).